A 602-amino-acid chain; its full sequence is Elongation factor 4 (602 aa).

Residues 7–189 form the tr-type G domain; sequence SRIRNFCIIA…AVVDRVPAPA (183 aa). GTP-binding positions include 19 to 24 and 136 to 139; these read DHGKST and NKID.

Belongs to the TRAFAC class translation factor GTPase superfamily. Classic translation factor GTPase family. LepA subfamily.

Its subcellular location is the cell inner membrane. It carries out the reaction GTP + H2O = GDP + phosphate + H(+). Functionally, required for accurate and efficient protein synthesis under certain stress conditions. May act as a fidelity factor of the translation reaction, by catalyzing a one-codon backward translocation of tRNAs on improperly translocated ribosomes. Back-translocation proceeds from a post-translocation (POST) complex to a pre-translocation (PRE) complex, thus giving elongation factor G a second chance to translocate the tRNAs correctly. Binds to ribosomes in a GTP-dependent manner. This is Elongation factor 4 from Synechococcus sp. (strain CC9902).